Here is a 318-residue protein sequence, read N- to C-terminus: Trans-prenyltransferase (318 aa).

Residues 1 to 21 (MLHLIYISIIVVLIIILISYT) form a helical membrane-spanning segment. Residues Lys85, Arg88, and His122 each contribute to the isopentenyl diphosphate site. Residues Asp129 and Asp135 each contribute to the Mg(2+) site. Arg140 provides a ligand contact to dimethylallyl diphosphate. Arg141 contacts isopentenyl diphosphate. The dimethylallyl diphosphate site is built by Lys216, Thr217, and Gln254.

It belongs to the FPP/GGPP synthase family. Asfivirus trans-prenyltransferase subfamily. Requires Mg(2+) as cofactor.

Its subcellular location is the host endoplasmic reticulum. It is found in the host membrane. The catalysed reaction is isopentenyl diphosphate + dimethylallyl diphosphate = (2E)-geranyl diphosphate + diphosphate. It catalyses the reaction isopentenyl diphosphate + (2E)-geranyl diphosphate = (2E,6E)-farnesyl diphosphate + diphosphate. It carries out the reaction isopentenyl diphosphate + (2E,6E)-farnesyl diphosphate = (2E,6E,10E)-geranylgeranyl diphosphate + diphosphate. The enzyme catalyses isopentenyl diphosphate + (2E,6E,10E)-geranylgeranyl diphosphate = (2E,6E,10E,14E)-geranylfarnesyl diphosphate + diphosphate. Its pathway is isoprenoid biosynthesis; farnesyl diphosphate biosynthesis; farnesyl diphosphate from geranyl diphosphate and isopentenyl diphosphate: step 1/1. It participates in isoprenoid biosynthesis; geranyl diphosphate biosynthesis; geranyl diphosphate from dimethylallyl diphosphate and isopentenyl diphosphate: step 1/1. The protein operates within isoprenoid biosynthesis; geranylgeranyl diphosphate biosynthesis; geranylgeranyl diphosphate from farnesyl diphosphate and isopentenyl diphosphate: step 1/1. In terms of biological role, trans-prenyltransferase that catalyzes the sequential condensation of isopentenyl diphosphate (IPP) with different allylic diphosphates, such as dimethylallyl diphosphate (DMAPP), geranyl diphosphate (GPP), farnesyl diphosphate (FPP) and geranylgeranyl diphosphate (GGPP), farnesyl diphosphate being the best allylic substrate. In African swine fever virus (isolate Warthog/Namibia/Wart80/1980) (ASFV), this protein is Trans-prenyltransferase.